Here is a 278-residue protein sequence, read N- to C-terminus: Large ribosomal subunit protein uL2 (278 aa).

The interval 214-278 (WLGKRPHNRG…IMRSRHQRKS (65 aa)) is disordered.

It belongs to the universal ribosomal protein uL2 family. Part of the 50S ribosomal subunit. Forms a bridge to the 30S subunit in the 70S ribosome.

Functionally, one of the primary rRNA binding proteins. Required for association of the 30S and 50S subunits to form the 70S ribosome, for tRNA binding and peptide bond formation. It has been suggested to have peptidyltransferase activity; this is somewhat controversial. Makes several contacts with the 16S rRNA in the 70S ribosome. The polypeptide is Large ribosomal subunit protein uL2 (Chelativorans sp. (strain BNC1)).